Reading from the N-terminus, the 187-residue chain is Protein GrpE (187 aa).

Residues 1 to 26 (MHDPKESLETNIQETESQEKLPETPI) are disordered.

It belongs to the GrpE family. In terms of assembly, homodimer.

It is found in the cytoplasm. Functionally, participates actively in the response to hyperosmotic and heat shock by preventing the aggregation of stress-denatured proteins, in association with DnaK and GrpE. It is the nucleotide exchange factor for DnaK and may function as a thermosensor. Unfolded proteins bind initially to DnaJ; upon interaction with the DnaJ-bound protein, DnaK hydrolyzes its bound ATP, resulting in the formation of a stable complex. GrpE releases ADP from DnaK; ATP binding to DnaK triggers the release of the substrate protein, thus completing the reaction cycle. Several rounds of ATP-dependent interactions between DnaJ, DnaK and GrpE are required for fully efficient folding. This is Protein GrpE from Dichelobacter nodosus (strain VCS1703A).